An 862-amino-acid polypeptide reads, in one-letter code: Valine--tRNA ligase (862 aa).

The 'HIGH' region signature appears at 44–53 (NVTGSLHMGH). Zn(2+) contacts are provided by cysteine 176, cysteine 179, cysteine 344, cysteine 347, cysteine 417, cysteine 420, cysteine 438, and cysteine 441. The short motif at 528–532 (KMSKS) is the 'KMSKS' region element. Lysine 531 lines the ATP pocket. A coiled-coil region spans residues 802-862 (RRRQEKRLKE…RIREALSQIG (61 aa)).

Belongs to the class-I aminoacyl-tRNA synthetase family. ValS type 1 subfamily. In terms of assembly, monomer. Zn(2+) is required as a cofactor.

The protein localises to the cytoplasm. The catalysed reaction is tRNA(Val) + L-valine + ATP = L-valyl-tRNA(Val) + AMP + diphosphate. Its function is as follows. Catalyzes the attachment of valine to tRNA(Val). As ValRS can inadvertently accommodate and process structurally similar amino acids such as threonine, to avoid such errors, it has a 'posttransfer' editing activity that hydrolyzes mischarged Thr-tRNA(Val) in a tRNA-dependent manner. The sequence is that of Valine--tRNA ligase from Thermus thermophilus (strain ATCC 27634 / DSM 579 / HB8).